We begin with the raw amino-acid sequence, 1836 residues long: U3 small nucleolar RNA-associated protein 10 (1836 aa).

The stretch at 245-283 is one HEAT 1 repeat; it reads EVVGFLLLPSKYETLRNIDVDTRLTAYSIIAVLASIIPI. Residues 453 to 473 are disordered; sequence SNSSVRDSDDVEFDAGEEDNN. Positions 461 to 473 are enriched in acidic residues; it reads DDVEFDAGEEDNN. 2 HEAT repeats span residues 585-623 and 813-850; these read PLDL…TTTS and VENR…DQDL. A disordered region spans residues 863-883; the sequence is QIPEQGPAKRRRRSSSSTKQA. The next 2 helical transmembrane spans lie at 998 to 1018 and 1085 to 1105; these read LLLV…HSVM and LFTY…LLFL. 3 HEAT repeats span residues 1333–1372, 1749–1787, and 1790–1828; these read ESVL…KFGA, ETLV…KMGE, and LTYL…NVLG.

It belongs to the HEATR1/UTP10 family. Component of the ribosomal small subunit (SSU) processome.

Its subcellular location is the nucleus. It localises to the nucleolus. The protein localises to the membrane. In terms of biological role, involved in nucleolar processing of pre-18S ribosomal RNA. Involved in ribosome biosynthesis. The protein is U3 small nucleolar RNA-associated protein 10 of Scheffersomyces stipitis (strain ATCC 58785 / CBS 6054 / NBRC 10063 / NRRL Y-11545) (Yeast).